A 188-amino-acid chain; its full sequence is GTP cyclohydrolase 1 (188 aa).

Positions 78, 81, and 150 each coordinate Zn(2+).

Belongs to the GTP cyclohydrolase I family. Toroid-shaped homodecamer, composed of two pentamers of five dimers.

It catalyses the reaction GTP + H2O = 7,8-dihydroneopterin 3'-triphosphate + formate + H(+). It functions in the pathway cofactor biosynthesis; 7,8-dihydroneopterin triphosphate biosynthesis; 7,8-dihydroneopterin triphosphate from GTP: step 1/1. This Geobacillus kaustophilus (strain HTA426) protein is GTP cyclohydrolase 1.